The chain runs to 811 residues: Hypoxia-inducible factor 1-alpha (811 aa).

The interval 1 to 27 (MDSPGGVTDKKRISSERRKEKSRDAAR) is disordered. Residues 8–27 (TDKKRISSERRKEKSRDAAR) show a composition bias toward basic and acidic residues. The bHLH domain maps to 17 to 70 (RRKEKSRDAARCRRSKESEVFYELAHQLPLPHTVSAHLDKASIMRLTISYLRMR). PAS domains follow at residues 80-157 (TEAN…PVKK) and 228-298 (PHPS…FTKG). The 44-residue stretch at 302-345 (TGQYRMLAKQGGYVWVETQATVIYNTKNSQPQCIVCVNYVLSGI) folds into the PAC domain. The interval 401-587 (APAAGDTIIS…LSPLESSSSG (187 aa)) is ODD. The residue at position 402 (Pro402) is a 4-hydroxyproline. Residues 490–518 (PQVQEQPTSPSDASTSQSSPEPSSPNDYC) are disordered. Positions 496 to 514 (PTSPSDASTSQSSPEPSSP) are enriched in low complexity. Residues 529–573 (FKLELVEKLFAIDTEAKNPFSTQETDLDLEMLAPYIPMDDDFQLR) are NTAD. Position 562 is a 4-hydroxyproline (Pro562). The ID stretch occupies residues 576–785 (DQLSPLESSS…GLPQLTSYDC (210 aa)). Residues 634-652 (NDTSSAPASPYSGNRSRTA) are compositionally biased toward polar residues. Positions 634–655 (NDTSSAPASPYSGNRSRTASPI) are disordered. Short sequence motifs (nuclear localization signal) lie at residues 703–706 (RKRK) and 718–721 (GIGS). The tract at residues 771–811 (SMDESGLPQLTSYDCEVNAPIQGNRNLLQGEELLRALDQVN) is CTAD. Asn788 bears the (3S)-3-hydroxyasparagine mark.

As to quaternary structure, efficient DNA binding requires heterodimerization of an alpha and a beta/ARNT subunit. In normoxia, is hydroxylated on Pro-402 and Pro-562. The hydroxylated prolines promote interaction with VHL, initiating rapid ubiquitination and subsequent proteasomal degradation. Under hypoxia, proline hydroxylation is impaired and ubiquitination is attenuated, resulting in stabilization. In terms of processing, in normoxia, is hydroxylated on Asn-788, thus abrogating interaction with CREBBP and EP300 and preventing transcriptional activation. Post-translationally, the iron and 2-oxoglutarate dependent 3-hydroxylation of asparagine is (S) stereospecific within HIF CTAD domains.

The protein localises to the cytoplasm. It localises to the nucleus. Its subcellular location is the nucleus speckle. Induced by reactive oxygen species (ROS). In terms of biological role, functions as a master transcriptional regulator of the adaptive response to hypoxia. Under hypoxic conditions, activates the transcription of over 40 genes, including erythropoietin, glucose transporters, glycolytic enzymes, vascular endothelial growth factor, HILPDA, and other genes whose protein products increase oxygen delivery or facilitate metabolic adaptation to hypoxia. Plays an essential role in embryonic vascularization, tumor angiogenesis and pathophysiology of ischemic disease. This Gallus gallus (Chicken) protein is Hypoxia-inducible factor 1-alpha (HIF1A).